The chain runs to 168 residues: RNA pyrophosphohydrolase (168 aa).

A Nudix hydrolase domain is found at 8–160 (PYRTCVGIAL…KRPVYERVAK (153 aa)). The Nudix box motif lies at 47-68 (GGVDPGEDAWEAAKRELYEETS).

This sequence belongs to the Nudix hydrolase family. RppH subfamily. A divalent metal cation serves as cofactor.

In terms of biological role, accelerates the degradation of transcripts by removing pyrophosphate from the 5'-end of triphosphorylated RNA, leading to a more labile monophosphorylated state that can stimulate subsequent ribonuclease cleavage. The sequence is that of RNA pyrophosphohydrolase from Bradyrhizobium sp. (strain ORS 278).